The primary structure comprises 509 residues: CDK5RAP3 protein homolog (509 aa).

The protein belongs to the CDK5RAP3 family.

The protein resides in the nucleus. It localises to the cytoplasm. Functionally, substrate adapter of E3 ligase complexes mediating ufmylation, the covalent attachment of the ubiquitin-like modifier UFM1 to substrate proteins, and which is involved in various processes, such as ribosome recycling and reticulophagy (also called ER-phagy). This is CDK5RAP3 protein homolog from Drosophila melanogaster (Fruit fly).